The sequence spans 1033 residues: NACHT, LRR and PYD domains-containing protein 11 (1033 aa).

The region spanning 1–91 is the Pyrin domain; sequence MAESDSTDFD…CRKIIGRRNR (91 aa). Positions 147–470 constitute an NACHT domain; it reads LNVFLMGERA…AFLMAVPNYL (324 aa). 153 to 160 serves as a coordination point for ATP; the sequence is GERASGKT. 6 LRR repeats span residues 588-611, 632-655, 745-768, 802-827, 859-882, and 919-944; these read CCHL…LIRP, MESL…ILSK, GGSL…ILCD, SPTL…TFPL, NEKL…LLCG, and LERL…LISP.

It belongs to the NLRP family.

In terms of biological role, involved in inflammation. In Homo sapiens (Human), this protein is NACHT, LRR and PYD domains-containing protein 11 (NLRP11).